A 317-amino-acid chain; its full sequence is Acetyl-coenzyme A carboxylase carboxyl transferase subunit beta (317 aa).

The 270-residue stretch at 30–299 folds into the CoA carboxyltransferase N-terminal domain; sequence LWTKCVACTA…VLPPLNVREK (270 aa). Residues Cys-34, Cys-37, Cys-53, and Cys-56 each coordinate Zn(2+). Residues 34–56 form a C4-type zinc finger; the sequence is CVACTALTYTKDLQANQLVCTEC.

This sequence belongs to the AccD/PCCB family. As to quaternary structure, acetyl-CoA carboxylase is a heterohexamer composed of biotin carboxyl carrier protein (AccB), biotin carboxylase (AccC) and two subunits each of ACCase subunit alpha (AccA) and ACCase subunit beta (AccD). Zn(2+) is required as a cofactor.

It is found in the cytoplasm. The catalysed reaction is N(6)-carboxybiotinyl-L-lysyl-[protein] + acetyl-CoA = N(6)-biotinyl-L-lysyl-[protein] + malonyl-CoA. It participates in lipid metabolism; malonyl-CoA biosynthesis; malonyl-CoA from acetyl-CoA: step 1/1. Its function is as follows. Component of the acetyl coenzyme A carboxylase (ACC) complex. Biotin carboxylase (BC) catalyzes the carboxylation of biotin on its carrier protein (BCCP) and then the CO(2) group is transferred by the transcarboxylase to acetyl-CoA to form malonyl-CoA. In Crocosphaera subtropica (strain ATCC 51142 / BH68) (Cyanothece sp. (strain ATCC 51142)), this protein is Acetyl-coenzyme A carboxylase carboxyl transferase subunit beta.